Reading from the N-terminus, the 310-residue chain is Iron ABC transporter substrate-binding lipoprotein MtsA (310 aa).

The first 20 residues, 1-20 (MGKRMSLILGAFLSVFLLVA), serve as a signal peptide directing secretion. C21 carries the N-palmitoyl cysteine lipid modification. C21 is lipidated: S-diacylglycerol cysteine. Residues H68, H140, E206, and D281 each coordinate Fe(2+).

The protein belongs to the bacterial solute-binding protein 9 family. Lipoprotein receptor antigen (Lrai) subfamily.

It localises to the cell membrane. Functionally, part of the ATP-binding cassette (ABC) transport system MtsABC involved in iron import. Binds iron with high affinity and specificity and delivers it to the membrane permease for translocation into the cytoplasm. Has low affinity for Zn(2+) and Cu(2+). The polypeptide is Iron ABC transporter substrate-binding lipoprotein MtsA (mtsA) (Streptococcus pyogenes serotype M1).